A 403-amino-acid polypeptide reads, in one-letter code: Phosphopentomutase (403 aa).

Residues Asp-13, Asp-298, His-303, Asp-339, His-340, and His-351 each contribute to the Mn(2+) site.

The protein belongs to the phosphopentomutase family. Requires Mn(2+) as cofactor.

The protein localises to the cytoplasm. It catalyses the reaction 2-deoxy-alpha-D-ribose 1-phosphate = 2-deoxy-D-ribose 5-phosphate. The enzyme catalyses alpha-D-ribose 1-phosphate = D-ribose 5-phosphate. Its pathway is carbohydrate degradation; 2-deoxy-D-ribose 1-phosphate degradation; D-glyceraldehyde 3-phosphate and acetaldehyde from 2-deoxy-alpha-D-ribose 1-phosphate: step 1/2. Functionally, isomerase that catalyzes the conversion of deoxy-ribose 1-phosphate (dRib-1-P) and ribose 1-phosphate (Rib-1-P) to deoxy-ribose 5-phosphate (dRib-5-P) and ribose 5-phosphate (Rib-5-P), respectively. This Streptococcus pyogenes serotype M12 (strain MGAS2096) protein is Phosphopentomutase.